Here is a 219-residue protein sequence, read N- to C-terminus: DnaJ homolog subfamily C member 30, mitochondrial (219 aa).

Residues 1 to 38 (MAAARCLGWTLSPLWRWWQVRGLPPSSATGLCSRGRTY) constitute a mitochondrion transit peptide. The 66-residue stretch at 42–107 (ALYELLGVPS…ILRRKYDRGL (66 aa)) folds into the J domain. The tract at residues 109–148 (SDQDLRGPGVKPSKTPVADPAPPRPPPYTPRAPGGSRASP) is disordered. The segment covering 127-138 (DPAPPRPPPYTP) has biased composition (pro residues). A helical transmembrane segment spans residues 202-218 (ATFFVVLFLIFVFVGFR).

In terms of assembly, associates with the ATP synthase complex. Interacts with MT-ATP6; interaction is direct. Interacts with ATP5MC2; interaction is direct. In terms of tissue distribution, in brain, expressed in gray matter structures.

Its subcellular location is the mitochondrion inner membrane. In terms of biological role, mitochondrial protein enriched in neurons that acts as a regulator of mitochondrial respiration. Associates with the ATP synthase complex and facilitates ATP synthesis. May be a chaperone protein involved in the turnover of the subunits of mitochondrial complex I N-module. It facilitates the degradation of N-module subunits damaged by oxidative stress, and contributes to complex I functional efficiency. The sequence is that of DnaJ homolog subfamily C member 30, mitochondrial from Mus musculus (Mouse).